Here is a 343-residue protein sequence, read N- to C-terminus: Anthranilate phosphoribosyltransferase (343 aa).

5-phospho-alpha-D-ribose 1-diphosphate-binding positions include G83, G86 to D87, T91, N93 to T96, K111 to S119, and S123. Residue G83 participates in anthranilate binding. S95 serves as a coordination point for Mg(2+). R169 contacts anthranilate. Mg(2+) contacts are provided by D228 and E229.

The protein belongs to the anthranilate phosphoribosyltransferase family. Homodimer. The cofactor is Mg(2+).

It carries out the reaction N-(5-phospho-beta-D-ribosyl)anthranilate + diphosphate = 5-phospho-alpha-D-ribose 1-diphosphate + anthranilate. Its pathway is amino-acid biosynthesis; L-tryptophan biosynthesis; L-tryptophan from chorismate: step 2/5. Catalyzes the transfer of the phosphoribosyl group of 5-phosphorylribose-1-pyrophosphate (PRPP) to anthranilate to yield N-(5'-phosphoribosyl)-anthranilate (PRA). This Thiobacillus denitrificans (strain ATCC 25259 / T1) protein is Anthranilate phosphoribosyltransferase.